The chain runs to 211 residues: Peptide methionine sulfoxide reductase MsrA (211 aa).

Cysteine 52 is an active-site residue.

It belongs to the MsrA Met sulfoxide reductase family.

It carries out the reaction L-methionyl-[protein] + [thioredoxin]-disulfide + H2O = L-methionyl-(S)-S-oxide-[protein] + [thioredoxin]-dithiol. It catalyses the reaction [thioredoxin]-disulfide + L-methionine + H2O = L-methionine (S)-S-oxide + [thioredoxin]-dithiol. In terms of biological role, has an important function as a repair enzyme for proteins that have been inactivated by oxidation. Catalyzes the reversible oxidation-reduction of methionine sulfoxide in proteins to methionine. This Photobacterium profundum (strain SS9) protein is Peptide methionine sulfoxide reductase MsrA.